The sequence spans 277 residues: Sulfur carrier protein FdhD (277 aa).

Cys121 acts as the Cysteine persulfide intermediate in catalysis. 260 to 265 (FCKPGR) contributes to the Mo-bis(molybdopterin guanine dinucleotide) binding site.

Belongs to the FdhD family.

Its subcellular location is the cytoplasm. Required for formate dehydrogenase (FDH) activity. Acts as a sulfur carrier protein that transfers sulfur from IscS to the molybdenum cofactor prior to its insertion into FDH. The sequence is that of Sulfur carrier protein FdhD from Escherichia coli O6:K15:H31 (strain 536 / UPEC).